The chain runs to 337 residues: Monoacylglycerol lipase abhd6-B (337 aa).

Topologically, residues 1–19 are extracellular; that stretch reads MDIDVLNMFLVAGGTLLVP. The helical; Signal-anchor for type II membrane protein transmembrane segment at 20–42 threads the bilayer; it reads LLAFMTSFLLWPAALIRIYYWYW. Residues 43-337 lie on the Cytoplasmic side of the membrane; it reads RRALGMQVKY…QSTDNHKKHD (295 aa). An AB hydrolase-1 domain is found at 72–313; that stretch reads PSVLMLHGFS…CGHSVVMERP (242 aa). Catalysis depends on Ser148, which acts as the Nucleophile. Active-site charge relay system residues include Asp278 and His306.

Belongs to the AB hydrolase superfamily.

The protein localises to the late endosome membrane. It localises to the lysosome membrane. Its subcellular location is the mitochondrion membrane. The catalysed reaction is Hydrolyzes glycerol monoesters of long-chain fatty acids.. It carries out the reaction 1-octanoylglycerol + H2O = octanoate + glycerol + H(+). It catalyses the reaction 1-decanoylglycerol + H2O = decanoate + glycerol + H(+). The enzyme catalyses 1-dodecanoylglycerol + H2O = dodecanoate + glycerol + H(+). The catalysed reaction is 1-tetradecanoylglycerol + H2O = tetradecanoate + glycerol + H(+). It carries out the reaction 2-hexadecanoylglycerol + H2O = glycerol + hexadecanoate + H(+). It catalyses the reaction 2-(9Z-octadecenoyl)-glycerol + H2O = glycerol + (9Z)-octadecenoate + H(+). The enzyme catalyses 1-(9Z-octadecenoyl)-glycerol + H2O = glycerol + (9Z)-octadecenoate + H(+). The catalysed reaction is 2-(9Z,12Z-octadecadienoyl)-glycerol + H2O = (9Z,12Z)-octadecadienoate + glycerol + H(+). It carries out the reaction 2-(5Z,8Z,11Z,14Z-eicosatetraenoyl)-glycerol + H2O = glycerol + (5Z,8Z,11Z,14Z)-eicosatetraenoate + H(+). It catalyses the reaction 1-(5Z,8Z,11Z,14Z-eicosatetraenoyl)-glycerol + H2O = glycerol + (5Z,8Z,11Z,14Z)-eicosatetraenoate + H(+). The enzyme catalyses 1-(9Z,12Z-octadecadienoyl)-glycerol + H2O = (9Z,12Z)-octadecadienoate + glycerol + H(+). The catalysed reaction is 3-(9Z-octadecenoyl)-sn-glycero-1-phospho-(3'-(9Z-octadecenoyl)-1'-sn-glycerol) + H2O = 3-(9Z-octadecenoyl)-sn-glycero-1-phospho-(1'-sn-glycerol) + (9Z)-octadecenoate + H(+). It carries out the reaction (S,S)-2-(9Z-octadecenoyl)-sn-glycero-1-phospho-(2'-(9Z-octadecenoyl)-1'-sn-glycerol) + H2O = (S,S)-2-(9Z-octadecenoyl)-sn-glycero-1-phospho-(1'-sn-glycerol) + (9Z)-octadecenoate + H(+). It catalyses the reaction (R,R)-2-(9Z-octadecenoyl)-sn-glycero-3-phospho-(2'-(9Z-octadecenoyl)-3'-sn-glycerol) + H2O = (R,R)-2-(9Z-octadecenoyl)-sn-glycero-3-phospho-(3'-sn-glycerol) + (9Z)-octadecenoate + H(+). Functionally, lipase that preferentially hydrolysis medium-chain saturated monoacylglycerols including 2-arachidonoylglycerol. Through 2-arachidonoylglycerol degradation may regulate endocannabinoid signaling pathways. Also has a lysophosphatidyl lipase activity with a preference for lysophosphatidylglycerol among other lysophospholipids. Also able to degrade bis(monoacylglycero)phosphate (BMP) and constitutes the major enzyme for BMP catabolism. BMP, also known as lysobisphosphatidic acid, is enriched in late endosomes and lysosomes and plays a key role in the formation of intraluminal vesicles and in lipid sorting. The polypeptide is Monoacylglycerol lipase abhd6-B (abhd6-b) (Xenopus laevis (African clawed frog)).